A 608-amino-acid polypeptide reads, in one-letter code: 1-deoxy-D-xylulose-5-phosphate synthase (608 aa).

Residues His66 and 107-109 each bind thiamine diphosphate; that span reads GHA. A Mg(2+)-binding site is contributed by Asp138. Thiamine diphosphate-binding positions include 139 to 140, Asn167, Phe277, and Glu350; that span reads GA. Asn167 is a Mg(2+) binding site.

Belongs to the transketolase family. DXPS subfamily. In terms of assembly, homodimer. It depends on Mg(2+) as a cofactor. Requires thiamine diphosphate as cofactor.

The enzyme catalyses D-glyceraldehyde 3-phosphate + pyruvate + H(+) = 1-deoxy-D-xylulose 5-phosphate + CO2. It participates in metabolic intermediate biosynthesis; 1-deoxy-D-xylulose 5-phosphate biosynthesis; 1-deoxy-D-xylulose 5-phosphate from D-glyceraldehyde 3-phosphate and pyruvate: step 1/1. In terms of biological role, catalyzes the acyloin condensation reaction between C atoms 2 and 3 of pyruvate and glyceraldehyde 3-phosphate to yield 1-deoxy-D-xylulose-5-phosphate (DXP). The protein is 1-deoxy-D-xylulose-5-phosphate synthase of Thermotoga maritima (strain ATCC 43589 / DSM 3109 / JCM 10099 / NBRC 100826 / MSB8).